A 193-amino-acid polypeptide reads, in one-letter code: Phosphoheptose isomerase (193 aa).

Residues 37-193 (LAASFKADGK…QLIEKEMASV (157 aa)) form the SIS domain. 52–54 (NGG) lines the substrate pocket. Zn(2+) is bound by residues His-61 and Glu-65. Residues Glu-65, 93–94 (ND), 119–121 (STS), Ser-124, and Gln-172 contribute to the substrate site. Gln-172 and His-180 together coordinate Zn(2+).

It belongs to the SIS family. GmhA subfamily. In terms of assembly, homotetramer. Requires Zn(2+) as cofactor.

Its subcellular location is the cytoplasm. It catalyses the reaction 2 D-sedoheptulose 7-phosphate = D-glycero-alpha-D-manno-heptose 7-phosphate + D-glycero-beta-D-manno-heptose 7-phosphate. It functions in the pathway carbohydrate biosynthesis; D-glycero-D-manno-heptose 7-phosphate biosynthesis; D-glycero-alpha-D-manno-heptose 7-phosphate and D-glycero-beta-D-manno-heptose 7-phosphate from sedoheptulose 7-phosphate: step 1/1. Catalyzes the isomerization of sedoheptulose 7-phosphate in D-glycero-D-manno-heptose 7-phosphate. In Edwardsiella ictaluri (strain 93-146), this protein is Phosphoheptose isomerase.